The following is a 528-amino-acid chain: Phenylalanine--tRNA ligase alpha subunit (528 aa).

The L-phenylalanine site is built by Thr365 and Phe444. Mg(2+) is bound at residue Glu446. Phe469 contacts L-phenylalanine.

Belongs to the class-II aminoacyl-tRNA synthetase family. Phe-tRNA synthetase alpha subunit type 2 subfamily. In terms of assembly, tetramer of two alpha and two beta subunits. The cofactor is Mg(2+).

The protein resides in the cytoplasm. The enzyme catalyses tRNA(Phe) + L-phenylalanine + ATP = L-phenylalanyl-tRNA(Phe) + AMP + diphosphate + H(+). In Borreliella burgdorferi (strain ATCC 35210 / DSM 4680 / CIP 102532 / B31) (Borrelia burgdorferi), this protein is Phenylalanine--tRNA ligase alpha subunit.